The sequence spans 485 residues: Cysteine--tRNA ligase (485 aa).

Position 27 (Cys27) interacts with Zn(2+). The 'HIGH' region motif lies at 29-39; sequence ITAYDLCHIGH. Cys208, His233, and Glu237 together coordinate Zn(2+). Residues 265-269 carry the 'KMSKS' region motif; sequence KMSKS. Residue Lys268 participates in ATP binding.

This sequence belongs to the class-I aminoacyl-tRNA synthetase family. In terms of assembly, monomer. Requires Zn(2+) as cofactor.

It is found in the cytoplasm. The catalysed reaction is tRNA(Cys) + L-cysteine + ATP = L-cysteinyl-tRNA(Cys) + AMP + diphosphate. This chain is Cysteine--tRNA ligase, found in Solidesulfovibrio magneticus (strain ATCC 700980 / DSM 13731 / RS-1) (Desulfovibrio magneticus).